The following is a 533-amino-acid chain: Multicopper oxidase CueO (533 aa).

Residues 1-28 (MHRRDFLKLTAALGAATSLPLWSRAALA) constitute a signal peptide (tat-type signal). Plastocyanin-like domains lie at 53-166 (QTGS…IDDS), 221-290 (PYPQ…DTRD), and 416-532 (AFNF…FTVS). Positions 102, 104, 142, and 144 each coordinate Cu cation. Cu cation contacts are provided by His-458, His-461, His-463, His-514, Cys-515, His-516, and His-520.

It belongs to the multicopper oxidase family. As to quaternary structure, monomer. The cofactor is Cu cation. Post-translationally, predicted to be exported by the Tat system. The position of the signal peptide cleavage has not been experimentally proven.

Its subcellular location is the periplasm. It catalyses the reaction 4 Cu(+) + O2 + 4 H(+) = 4 Cu(2+) + 2 H2O. Its function is as follows. Multicopper oxidase involved in copper homeostasis and copper tolerance under aerobic conditions. Is responsible for the oxidation of Cu(+) to the less harmful Cu(2+) in the periplasm, thereby preventing Cu(+) from entering the cytoplasm. The sequence is that of Multicopper oxidase CueO (cueO) from Yersinia pestis.